The primary structure comprises 301 residues: Radial spoke head 1 homolog (301 aa).

A compositionally biased stretch (acidic residues) spans 1–20 (MSDLGSEELEEEGENDLGEY). Residues 1–41 (MSDLGSEELEEEGENDLGEYEGERNEVGERHGHGKARLPNG) are disordered. MORN repeat units lie at residues 20–43 (YEGE…NGDT), 44–66 (YEGS…NGAR), 67–89 (YTGD…DGSR), 90–112 (YEGE…NNDT), 113–135 (YTGE…ETGS), and 159–181 (YQGK…IGCE). Residues 21–31 (EGERNEVGERH) are compositionally biased toward basic and acidic residues. The segment at 225-301 (LSEEQPPPEG…FDEEPSDLQD (77 aa)) is disordered. The segment covering 249 to 261 (PSEDIQAEGFEGE) has biased composition (acidic residues). A compositionally biased stretch (basic and acidic residues) spans 262–278 (LEPRGADEDVDTFRQES). Over residues 279-290 (QENSYDIDQGNL) the composition is skewed to polar residues. A compositionally biased stretch (acidic residues) spans 292–301 (FDEEPSDLQD).

Component of the axonemal radial spoke 1 (RS1) and 2 (RS2) complexes, at least composed of spoke head proteins RSPH1, RSPH3, RSPH9 and the cilia-specific component RSPH4A or sperm-specific component RSPH6A, spoke stalk proteins RSPH14, DNAJB13, DYDC1, ROPN1L and NME5, and the RS1 complex-specific anchor protein IQUB. Interacts with RSPH3B. Interacts with RSPH4A. Interacts with RSPH6A. In terms of tissue distribution, expressed in the trachea, ependymal cells, oviduct and ependymal cells (at protein level). Germ cell specific. Specifically expressed in testis, and to a lower extent in ovary. Not expressed in somatic tissues.

The protein resides in the cytoplasm. It localises to the chromosome. Its subcellular location is the cytoskeleton. The protein localises to the cilium axoneme. It is found in the flagellum axoneme. Functionally, functions as part of axonemal radial spoke complexes that play an important part in the motility of sperm and cilia. This chain is Radial spoke head 1 homolog (Rsph1), found in Mus musculus (Mouse).